Consider the following 471-residue polypeptide: Putative multidrug resistance protein MdtD (471 aa).

At 1 to 11 the chain is on the periplasmic side; sequence MTDLPDSTRWQ. Residues 12–32 form a helical membrane-spanning segment; that stretch reads LWIVAFGFFMQSLDTTIVNTA. Over 33-48 the chain is Cytoplasmic; that stretch reads LPSMAQSLGESPLHMH. Residues 49-69 traverse the membrane as a helical segment; sequence MVIVSYVLTVAVMLPASGWLA. At 70 to 76 the chain is on the periplasmic side; the sequence is DKVGVRN. The chain crosses the membrane as a helical span at residues 77 to 97; sequence IFFTAIVLFTLGSLFCALSAT. Residues 98-101 are Cytoplasmic-facing; the sequence is LNEL. The chain crosses the membrane as a helical span at residues 102–124; that stretch reads LLARALQGVGGAMMVPVGRLTVM. The Periplasmic segment spans residues 125–137; that stretch reads KIVPREQYMAAMT. Residues 138–158 form a helical membrane-spanning segment; it reads FVTLPGQVGPLLGPALGGLLV. Residues 159–164 are Cytoplasmic-facing; sequence EYASWH. The helical transmembrane segment at 165–185 threads the bilayer; that stretch reads WIFLINIPVGIIGAIATLMLM. Topologically, residues 186–196 are periplasmic; the sequence is PNYTMQTRRFD. Residues 197–217 form a helical membrane-spanning segment; that stretch reads LSGFLLLAVGMAVLTLALDGS. The Cytoplasmic portion of the chain corresponds to 218 to 224; the sequence is KGTGLSP. Residues 225 to 245 form a helical membrane-spanning segment; the sequence is LAIAGLAAIGVVALVLYLLHA. Residues 246 to 262 are Periplasmic-facing; the sequence is RNNNRALFSLKLFRTRT. Residues 263 to 283 traverse the membrane as a helical segment; sequence FSLGLAGSFAGRIGSGMLPFM. Topologically, residues 284–285 are cytoplasmic; it reads TP. The helical transmembrane segment at 286 to 306 threads the bilayer; the sequence is VFLQIGLGFSPFHAGLMMIPM. Residues 307–341 lie on the Periplasmic side of the membrane; it reads VLGSMGMKRIVVQVVNRFGYRRVLVATTLGLSLVT. The helical transmembrane segment at 342 to 362 threads the bilayer; that stretch reads LLFMTTALLGWYYVLPFVLFL. The Cytoplasmic segment spans residues 363–395; that stretch reads QGMVNSTRFSSMNTLTLKDLPDNLASSGNSLLS. The helical transmembrane segment at 396–416 threads the bilayer; sequence MIMQLSMSIGVTIAGLLLGLF. The Periplasmic portion of the chain corresponds to 417–430; it reads GSQHVSVDSSTTQT. The helical transmembrane segment at 431–451 threads the bilayer; sequence VFMYTWLSMALIIALPAFIFA. At 452-471 the chain is on the cytoplasmic side; the sequence is RVPNDTHQNVAISRRKRSAQ.

Belongs to the major facilitator superfamily. TCR/Tet family.

It localises to the cell inner membrane. This chain is Putative multidrug resistance protein MdtD, found in Escherichia fergusonii (strain ATCC 35469 / DSM 13698 / CCUG 18766 / IAM 14443 / JCM 21226 / LMG 7866 / NBRC 102419 / NCTC 12128 / CDC 0568-73).